The primary structure comprises 178 residues: ATP synthase subunit delta (178 aa).

This sequence belongs to the ATPase delta chain family. F-type ATPases have 2 components, F(1) - the catalytic core - and F(0) - the membrane proton channel. F(1) has five subunits: alpha(3), beta(3), gamma(1), delta(1), epsilon(1). F(0) has three main subunits: a(1), b(2) and c(10-14). The alpha and beta chains form an alternating ring which encloses part of the gamma chain. F(1) is attached to F(0) by a central stalk formed by the gamma and epsilon chains, while a peripheral stalk is formed by the delta and b chains.

The protein localises to the cell membrane. Its function is as follows. F(1)F(0) ATP synthase produces ATP from ADP in the presence of a proton or sodium gradient. F-type ATPases consist of two structural domains, F(1) containing the extramembraneous catalytic core and F(0) containing the membrane proton channel, linked together by a central stalk and a peripheral stalk. During catalysis, ATP synthesis in the catalytic domain of F(1) is coupled via a rotary mechanism of the central stalk subunits to proton translocation. Functionally, this protein is part of the stalk that links CF(0) to CF(1). It either transmits conformational changes from CF(0) to CF(1) or is implicated in proton conduction. The polypeptide is ATP synthase subunit delta (Streptococcus equi subsp. zooepidemicus (strain MGCS10565)).